A 30-amino-acid polypeptide reads, in one-letter code: Trypsin inhibitor 2 (30 aa).

Intrachain disulfides connect cysteine 2–cysteine 19, cysteine 9–cysteine 21, and cysteine 15–cysteine 27.

The protein belongs to the protease inhibitor I7 (squash-type serine protease inhibitor) family.

It localises to the secreted. Its function is as follows. Inhibits trypsin. This chain is Trypsin inhibitor 2, found in Ecballium elaterium (Squirting cucumber).